Here is a 308-residue protein sequence, read N- to C-terminus: Phosphoribosylaminoimidazole-succinocarboxamide synthase (308 aa).

Belongs to the SAICAR synthetase family.

The enzyme catalyses 5-amino-1-(5-phospho-D-ribosyl)imidazole-4-carboxylate + L-aspartate + ATP = (2S)-2-[5-amino-1-(5-phospho-beta-D-ribosyl)imidazole-4-carboxamido]succinate + ADP + phosphate + 2 H(+). The protein operates within purine metabolism; IMP biosynthesis via de novo pathway; 5-amino-1-(5-phospho-D-ribosyl)imidazole-4-carboxamide from 5-amino-1-(5-phospho-D-ribosyl)imidazole-4-carboxylate: step 1/2. This chain is Phosphoribosylaminoimidazole-succinocarboxamide synthase, found in Stenotrophomonas maltophilia (strain R551-3).